Reading from the N-terminus, the 828-residue chain is Translation initiation factor IF-2 (828 aa).

2 disordered regions span residues 48 to 76 (SYSGSTTTLSLNKEKGSLETGSSSGSEEF) and 112 to 148 (ASQEDPIEVEQEESSDTNKVKEEPKIEEVKDIEESTL). Positions 49–58 (YSGSTTTLSL) are enriched in polar residues. Low complexity predominate over residues 65–74 (LETGSSSGSE). A compositionally biased stretch (acidic residues) spans 116–126 (DPIEVEQEESS). Basic and acidic residues predominate over residues 127 to 144 (DTNKVKEEPKIEEVKDIE). The tr-type G domain occupies 326-496 (SRAPVVTVMG…LLIAEMQNLK (171 aa)). The tract at residues 335–342 (GHVDHGKT) is G1. GTP is bound at residue 335–342 (GHVDHGKT). Positions 360–364 (GITQH) are G2. The tract at residues 382 to 385 (DTPG) is G3. Residues 382-386 (DTPGH) and 436-439 (NKID) contribute to the GTP site. The segment at 436–439 (NKID) is G4. Residues 472–474 (SAL) are G5.

Belongs to the TRAFAC class translation factor GTPase superfamily. Classic translation factor GTPase family. IF-2 subfamily.

The protein localises to the cytoplasm. In terms of biological role, one of the essential components for the initiation of protein synthesis. Protects formylmethionyl-tRNA from spontaneous hydrolysis and promotes its binding to the 30S ribosomal subunits. Also involved in the hydrolysis of GTP during the formation of the 70S ribosomal complex. The polypeptide is Translation initiation factor IF-2 (Rickettsia bellii (strain OSU 85-389)).